The primary structure comprises 251 residues: tRNA pseudouridine synthase A 1 (251 aa).

The active-site Nucleophile is the D52. Residue Y110 coordinates substrate.

This sequence belongs to the tRNA pseudouridine synthase TruA family. As to quaternary structure, homodimer.

It carries out the reaction uridine(38/39/40) in tRNA = pseudouridine(38/39/40) in tRNA. Its function is as follows. Formation of pseudouridine at positions 38, 39 and 40 in the anticodon stem and loop of transfer RNAs. The sequence is that of tRNA pseudouridine synthase A 1 from Desulfotalea psychrophila (strain LSv54 / DSM 12343).